The sequence spans 289 residues: Probable porphobilinogen deaminase (289 aa).

The residue at position 233 (Cys-233) is an S-(dipyrrolylmethanemethyl)cysteine.

It belongs to the HMBS family. The cofactor is dipyrromethane.

It carries out the reaction 4 porphobilinogen + H2O = hydroxymethylbilane + 4 NH4(+). The protein operates within porphyrin-containing compound metabolism; protoporphyrin-IX biosynthesis; coproporphyrinogen-III from 5-aminolevulinate: step 2/4. Functionally, tetrapolymerization of the monopyrrole PBG into the hydroxymethylbilane pre-uroporphyrinogen in several discrete steps. The protein is Probable porphobilinogen deaminase (hemC) of Methanothermobacter thermautotrophicus (strain ATCC 29096 / DSM 1053 / JCM 10044 / NBRC 100330 / Delta H) (Methanobacterium thermoautotrophicum).